The following is a 221-amino-acid chain: Iron-sulfur cluster repair protein YtfE (221 aa).

Belongs to the RIC family. YtfE subfamily. As to quaternary structure, homodimer.

Its subcellular location is the cytoplasm. Functionally, di-iron-containing protein involved in the repair of iron-sulfur clusters damaged by oxidative and nitrosative stress conditions. The sequence is that of Iron-sulfur cluster repair protein YtfE from Pectobacterium carotovorum subsp. carotovorum (strain PC1).